We begin with the raw amino-acid sequence, 233 residues long: Sugar fermentation stimulation protein homolog (233 aa).

This sequence belongs to the SfsA family.

The protein is Sugar fermentation stimulation protein homolog of Rhodospirillum centenum (strain ATCC 51521 / SW).